The sequence spans 443 residues: Glutamyl-tRNA reductase (443 aa).

Residues 49–52 (TCNR), Ser109, 114–116 (ETQ), and Gln120 contribute to the substrate site. Catalysis depends on Cys50, which acts as the Nucleophile. Position 189 to 194 (189 to 194 (GAGKMG)) interacts with NADP(+).

Belongs to the glutamyl-tRNA reductase family. In terms of assembly, homodimer.

The enzyme catalyses (S)-4-amino-5-oxopentanoate + tRNA(Glu) + NADP(+) = L-glutamyl-tRNA(Glu) + NADPH + H(+). The protein operates within porphyrin-containing compound metabolism; protoporphyrin-IX biosynthesis; 5-aminolevulinate from L-glutamyl-tRNA(Glu): step 1/2. Its function is as follows. Catalyzes the NADPH-dependent reduction of glutamyl-tRNA(Glu) to glutamate 1-semialdehyde (GSA). This Bacillus mycoides (strain KBAB4) (Bacillus weihenstephanensis) protein is Glutamyl-tRNA reductase.